A 394-amino-acid chain; its full sequence is Elongation factor Tu (394 aa).

Residues 10-204 form the tr-type G domain; sequence KPHVNVGTIG…YLDSYIPEPE (195 aa). A G1 region spans residues 19–26; sequence GHVDHGKT. 19 to 26 contacts GTP; that stretch reads GHVDHGKT. Threonine 26 is a Mg(2+) binding site. The interval 60–64 is G2; that stretch reads GITIN. Residues 81–84 are G3; it reads DCPG. GTP contacts are provided by residues 81-85 and 136-139; these read DCPGH and NKCD. Positions 136–139 are G4; that stretch reads NKCD. The segment at 174 to 176 is G5; sequence SAL.

It belongs to the TRAFAC class translation factor GTPase superfamily. Classic translation factor GTPase family. EF-Tu/EF-1A subfamily. Monomer.

The protein resides in the cytoplasm. The enzyme catalyses GTP + H2O = GDP + phosphate + H(+). Functionally, GTP hydrolase that promotes the GTP-dependent binding of aminoacyl-tRNA to the A-site of ribosomes during protein biosynthesis. This Enterobacter sp. (strain 638) protein is Elongation factor Tu.